Reading from the N-terminus, the 968-residue chain is MAKVMRLIIFVCVALVAISVPAASSVQSQQERIRPGFRQQLPSSIRPFSAFRRRGQEASDSVVYLNIVYLRLVGTRQCATGELTVVVHGKALNNATLGDVQTSLTRTFASSLKEPSSTLAIRRWSWKDPLFLMLTLNRRAVRTGTGLPRSTPLYQVAKQRLFVFVRKPTPTSSCRRAALDPRPLYGVPKVGVQDKYTLHVSMDVLGMSLREPLEHQEEEPGPASVSTYAAAQAILDGASSFGIGAFGSAKPNLKQISMYASGAELEKQVYTPTTSQLALFLPSKTFFGVEVTSVSDGTFRIPVSASRLVPFSAMSYMCTGSQTHKLTQTGMNVLEKRVHGKENPPSEGAEVLLNLLAARKPVNGVFEQDPTVVLLQLWRTPEGSESWQETPLMWEFPDTLEAIEDAGEYRSGILSSIAANTRIIGKMAGWLASRSFSRRFIRTLIRLNNIDLEEAFSMSDKDRRHSAADFRSVQEFFTRPINYHVYRDMDPRASIMAPADSLIQNIYTIRPDFKGEISHPIIPQVKSTSFNLREFLYGARQVPPLQLQSPSNRLFVSILYLAPSDYHRVHSPADWRVTSQTYIPGCTPSVSRRNLEAGDLLHRYERTALIGHWDPEKNGQQLFFSVTMVAAMFVGGLRLSWEEEPLGASMRLGRCTRYTESYEKQVDVELCASQEIGAFRFGSTVVMIFEAPEDFDMTSVGQCSHVAAGQPAGYLGQGRERPLQERCNAFRGNFESPFHFWKHLQKTSSVDDILKQNTLAPRAWRQEPGRVWAEVLRATERGLLYGFALSHYLLKRWATENGNLGELVLGQPEVLRQNINGSDSVIREGFRCFAAKDKKQIRLQMSGRQSQVSLTATVTPDEQFLFQHPFYGCVGDEKLGKLVRGIDATWILLPERAVLLTLKVSTGSKQEDGRVLRVATTKIEVQTEPCQGGWEESRVGTTSTTCAIRTVEKREESISEGVLTNGDL.

An N-terminal signal peptide occupies residues 1–25 (MAKVMRLIIFVCVALVAISVPAASS). Residues Asp-500, His-570, and Ser-683 each act as charge relay system; for autoendoproteolytic cleavage activity in the active site. Catalysis depends on Ser-683, which acts as the Schiff-base intermediate with substrate; via pyruvic acid; for decarboxylase activity. Ser-683 carries the pyruvic acid (Ser); by autocatalysis modification.

The protein belongs to the phosphatidylserine decarboxylase family. In terms of assembly, heterodimer of a large membrane-associated beta subunit and a small pyruvoyl-containing alpha subunit. Pyruvate serves as cofactor. Post-translationally, is synthesized initially as an inactive proenzyme. Formation of the active enzyme involves a self-maturation process in which the active site pyruvoyl group is generated from an internal serine residue via an autocatalytic post-translational modification. Two non-identical subunits are generated from the proenzyme in this reaction, and the pyruvate is formed at the N-terminus of the alpha chain, which is derived from the carboxyl end of the proenzyme. The autoendoproteolytic cleavage occurs by a canonical serine protease mechanism, in which the side chain hydroxyl group of the serine supplies its oxygen atom to form the C-terminus of the beta chain, while the remainder of the serine residue undergoes an oxidative deamination to produce ammonia and the pyruvoyl prosthetic group on the alpha chain. During this reaction, the Ser that is part of the protease active site of the proenzyme becomes the pyruvoyl prosthetic group, which constitutes an essential element of the active site of the mature decarboxylase.

The protein localises to the parasitophorous vacuole. It localises to the cytoplasmic vesicle. Its subcellular location is the secretory vesicle. The catalysed reaction is a 1,2-diacyl-sn-glycero-3-phospho-L-serine + H(+) = a 1,2-diacyl-sn-glycero-3-phosphoethanolamine + CO2. The protein operates within phospholipid metabolism; phosphatidylethanolamine biosynthesis; phosphatidylethanolamine from CDP-diacylglycerol: step 2/2. Functionally, catalyzes the formation of phosphatidylethanolamine (PtdEtn) from phosphatidylserine (PtdSer). Plays a central role in phospholipid metabolism and in the interorganelle trafficking of phosphatidylserine. Can act on liposomal and host cell PtdSer. The protein is Phosphatidylserine decarboxylase 2 proenzyme of Toxoplasma gondii (strain ATCC 50853 / GT1).